Reading from the N-terminus, the 283-residue chain is MKITRRPEWLQKKISPSAHAEMERLLGDLQLHTVCQEAHCPNISECFRSRQATFLILGNICTRLCSFCNVTKQSPHHFDPDEPARVAAAVQKLQLSHVVITSPTRDDLPDGGAGLYAQTVTAIRKAAPQTAIELLIPDFMGDHGSIAAVVAACPDISGHNLETVPRLYHIRSGADYRRSLDVLKIIHDLDPRLLTKSGLMLGLGETEVEIFQVLDDLLAVGCSYLSLGQYLAPSRSHYPVQGYVPPEIFDNYRERALAMGFKHVESGPYVRSSYHAEQYGMKG.

[4Fe-4S] cluster contacts are provided by Cys35, Cys40, Cys46, Cys61, Cys65, Cys68, and Ser273. The Radical SAM core domain occupies 47 to 262 (FRSRQATFLI…RERALAMGFK (216 aa)).

Belongs to the radical SAM superfamily. Lipoyl synthase family. [4Fe-4S] cluster is required as a cofactor.

It localises to the cytoplasm. It catalyses the reaction [[Fe-S] cluster scaffold protein carrying a second [4Fe-4S](2+) cluster] + N(6)-octanoyl-L-lysyl-[protein] + 2 oxidized [2Fe-2S]-[ferredoxin] + 2 S-adenosyl-L-methionine + 4 H(+) = [[Fe-S] cluster scaffold protein] + N(6)-[(R)-dihydrolipoyl]-L-lysyl-[protein] + 4 Fe(3+) + 2 hydrogen sulfide + 2 5'-deoxyadenosine + 2 L-methionine + 2 reduced [2Fe-2S]-[ferredoxin]. The protein operates within protein modification; protein lipoylation via endogenous pathway; protein N(6)-(lipoyl)lysine from octanoyl-[acyl-carrier-protein]: step 2/2. Catalyzes the radical-mediated insertion of two sulfur atoms into the C-6 and C-8 positions of the octanoyl moiety bound to the lipoyl domains of lipoate-dependent enzymes, thereby converting the octanoylated domains into lipoylated derivatives. The chain is Lipoyl synthase from Geotalea uraniireducens (strain Rf4) (Geobacter uraniireducens).